A 435-amino-acid polypeptide reads, in one-letter code: Oocyte zinc finger protein XlCOF22 (435 aa).

The disordered stretch occupies residues 71–92; sequence NANTSAHFSRNRDSDKHERTHT. Residues 80-91 show a composition bias toward basic and acidic residues; sequence RNRDSDKHERTH. 12 consecutive C2H2-type zinc fingers follow at residues 97 to 120, 126 to 148, 154 to 176, 182 to 204, 210 to 232, 238 to 260, 266 to 288, 294 to 316, 322 to 345, 351 to 373, 379 to 402, and 408 to 430; these read HSCSQCGKCFSSSSDLLAHRRQSH, FSCSECGKCFSFRSRLIDHQRTH, FCCFQCGKSFSVRSRFLDHRRTH, FSCLECGKCFLFRSRLLEHQRTH, FSCLKCGKCFSVRSRLKDHQRTH, FSCLECGKSFSFRPCLIDHQRTH, FSCFQCGKCFSFQSRLINHQRTH, FSCSECGKSFSNQSCLRVHQRTH, YSCSECGKSFVTSSQLAVHRRRTH, FSCSECGKCFSNQSCLRVHQRTH, FSCSECGKSFVTSSKLASHQRQTH, and VSCSECGKCFTRKRSLKVHFKIH.

It belongs to the krueppel C2H2-type zinc-finger protein family.

The protein localises to the nucleus. Its function is as follows. May be involved in transcriptional regulation. In Xenopus laevis (African clawed frog), this protein is Oocyte zinc finger protein XlCOF22.